Consider the following 773-residue polypeptide: Probable serine/threonine-protein kinase MARK-C (773 aa).

Residues 1 to 27 (MESNKSSSHGDVSTSPSFLNNHHQFNN) are compositionally biased toward polar residues. The disordered stretch occupies residues 1–32 (MESNKSSSHGDVSTSPSFLNNHHQFNNGGDII). The region spanning 46 to 300 (YEVGKTLGNG…IQELKNHPWT (255 aa)) is the Protein kinase domain. Residues 52–60 (LGNGTFGKV) and Lys75 contribute to the ATP site. The active-site Proton acceptor is the Asp171. Residues 362 to 390 (RYASKEVENLKSKLELLSKRKKSFSDKRN) adopt a coiled-coil conformation. Disordered regions lie at residues 382–445 (KKSF…SQGS), 462–487 (DNDI…NKDI), and 558–588 (YSIQ…TNLR). The span at 405–443 (DLSSNNNNNQQQQNSPPSKTNSSSTSSSNRESNNNSPSQ) shows a compositional bias: low complexity. The stretch at 445–474 (SIKEISLDELDNHIEQLDNDIENSDNNKSS) forms a coiled coil. The span at 468 to 478 (SDNNKSSSLTR) shows a compositional bias: polar residues. The span at 561 to 573 (QQQQLQQQQQQQQ) shows a compositional bias: low complexity. The KA1 domain occupies 724 to 773 (CFDEDNSVKFQIEIVKICNLDLTGIQLKRLSGDTWKYKDICTELVESMKL).

The protein belongs to the protein kinase superfamily. CAMK Ser/Thr protein kinase family. SNF1 subfamily.

The enzyme catalyses L-seryl-[protein] + ATP = O-phospho-L-seryl-[protein] + ADP + H(+). It carries out the reaction L-threonyl-[protein] + ATP = O-phospho-L-threonyl-[protein] + ADP + H(+). This Dictyostelium discoideum (Social amoeba) protein is Probable serine/threonine-protein kinase MARK-C (mrkC).